The following is a 185-amino-acid chain: Ribosome-recycling factor (185 aa).

It belongs to the RRF family.

It localises to the cytoplasm. In terms of biological role, responsible for the release of ribosomes from messenger RNA at the termination of protein biosynthesis. May increase the efficiency of translation by recycling ribosomes from one round of translation to another. The polypeptide is Ribosome-recycling factor (Neorickettsia sennetsu (strain ATCC VR-367 / Miyayama) (Ehrlichia sennetsu)).